The chain runs to 351 residues: MASSRARIAVDAMGGDYAPDEIIAGAIRASAELEVDVLLVGDSHRIESYLQQHHKPINVEIIHAEEVIAMDEEPLSAIRRKSKASINVAMDLVKEKRADAVVSAGHSGAAMASALLRLGRLKGIDRPAIGAVFPTILAGKSVIVLDVGANVDSRPKYLEQFALMGTIYSKYVLGIEEPKVGLLNIGEESSKGNDLALRTYQLLEANESIPFVGNAEGRDVLSGHFDVIVCDGFVGNVLLKFAEAVGEVMLQIIREELPQGLRGQLGTALLKPNLKRLKQRIDHAEHGGGLLFGVAGVCIISHGSSQAPSIFNAIRLAQDAINNQVLERIQAYNEQHQQESQNSTETVTSEQ.

It belongs to the PlsX family. In terms of assembly, homodimer. Probably interacts with PlsY.

It is found in the cytoplasm. The catalysed reaction is a fatty acyl-[ACP] + phosphate = an acyl phosphate + holo-[ACP]. It functions in the pathway lipid metabolism; phospholipid metabolism. Catalyzes the reversible formation of acyl-phosphate (acyl-PO(4)) from acyl-[acyl-carrier-protein] (acyl-ACP). This enzyme utilizes acyl-ACP as fatty acyl donor, but not acyl-CoA. This Gloeothece citriformis (strain PCC 7424) (Cyanothece sp. (strain PCC 7424)) protein is Phosphate acyltransferase.